The following is a 475-amino-acid chain: MSQLDVLILDDEESIRNLIAANLKDEGFNPKVAANSTQALKIISEKPVSAVILDIWLQGSEIDGLGVLEIIKKRYPLIPVIIISGHGTIETAVNAIKMGAYDYIEKPFNNDKLIILLKRACEVTKLKRENIDLKSKVIDKTELVGGCSVTLKYKMEIEKAASSSSRIMIHGKVGSGKELAARLIHKQSKRVNNPFIIFSPTCMTTEKINQELFGESEKQENNNKRPTILEFANNGTLYIDEVSNIPIPIQVKLLKFLKDQTITKPCGKKTKVDIKIITSTSKNIQDEVNNGKFLEDLYYRLNVFSLKVPSLYERKEDIPLLVKYFVKQLSKFSGLKERHFSDEAITALQSYEWPGNIRQLRNVVEWTLIMNPLTTGNNEIIKPYMIPSEILANSANLTKLEDSFDMLSMPLREAREVFERQYLSAQMSRFNNNISKTSSFVGMERSALHRKLKLLSLHIPPTNKINEEEYEKANA.

A Response regulatory domain is found at 5 to 121; it reads DVLILDDEES…KLIILLKRAC (117 aa). The residue at position 54 (aspartate 54) is a 4-aspartylphosphate. The 227-residue stretch at 143 to 369 folds into the Sigma-54 factor interaction domain; that stretch reads LVGGCSVTLK…LRNVVEWTLI (227 aa). ATP-binding positions include 171–178 and 232–241; these read GKVGSGKE and ANNGTLYIDE.

Member of the two-component regulatory system RT0550/RT0603. In Rickettsia typhi (strain ATCC VR-144 / Wilmington), this protein is Putative response regulator NtrX-like.